Reading from the N-terminus, the 500-residue chain is Cytochrome P450 81F1 (500 aa).

A helical transmembrane segment spans residues 1 to 21 (MLYFILLPLLFLVISYKFLYS). K248 participates in a covalent cross-link: Glycyl lysine isopeptide (Lys-Gly) (interchain with G-Cter in ubiquitin). C438 lines the heme pocket.

It belongs to the cytochrome P450 family. Requires heme as cofactor.

It localises to the membrane. It participates in secondary metabolite biosynthesis. Its function is as follows. Involved in indole glucosinolate biosynthesis. Catalyzes hydroxylation reactions of the glucosinolate indole ring. Converts indol-3-yl-methylglucosinolate (I3M) to 4-hydroxy-indol-3-yl-methylglucosinolate (4OH-I3M) and/or 1-hydroxy-indol-3-yl-methylglucosinolate (1OH-I3M) intermediates. These hydroxy intermediates are converted to 4-methoxy-indol-3-yl-methylglucosinolate (4MO-I3M) and 1-methoxy-indol-3-yl-methylglucosinolate (1MO-I3M) by indole glucosinolate methyltransferase 1 and 2 (IGMT1 and IGMT2). In Arabidopsis thaliana (Mouse-ear cress), this protein is Cytochrome P450 81F1.